A 212-amino-acid polypeptide reads, in one-letter code: MTIHTRIEGMAAPLPVSNLDTDQIMPKQFLRRIDKAGLAEGLLYDMRFGPDGKPRPEFVLNRPEYAAARILVAGPNFGCGSSREHAVWGLMQYGIQAVIAPSFGEIFYSNAMNNSLMLVALAEADVGTILADVSAPENSWITIDVASMTVRSKSLTASFSLSERHRRMFLEGLDMIGATLAMQDQIHAFAARHWQQRPWLKDIASMTKNRLA.

This sequence belongs to the LeuD family. LeuD type 1 subfamily. In terms of assembly, heterodimer of LeuC and LeuD.

It carries out the reaction (2R,3S)-3-isopropylmalate = (2S)-2-isopropylmalate. The protein operates within amino-acid biosynthesis; L-leucine biosynthesis; L-leucine from 3-methyl-2-oxobutanoate: step 2/4. Catalyzes the isomerization between 2-isopropylmalate and 3-isopropylmalate, via the formation of 2-isopropylmaleate. In Chromobacterium violaceum (strain ATCC 12472 / DSM 30191 / JCM 1249 / CCUG 213 / NBRC 12614 / NCIMB 9131 / NCTC 9757 / MK), this protein is 3-isopropylmalate dehydratase small subunit 1.